A 782-amino-acid polypeptide reads, in one-letter code: Sulfate permease family protein 3 (782 aa).

A run of 12 helical transmembrane segments spans residues 30–52 (YACS…TWLP), 64–84 (LSGG…LASI), 86–106 (GVPP…YIFF), 113–133 (ALGG…KVML), 196–216 (IHVA…MGVF), 232–252 (GFVV…MLGI), 274–294 (LDNV…FLVF), 302–322 (WLNS…VVGI), 359–379 (HIGL…ITVA), 398–418 (ALGF…TSGF), 433–453 (LTCL…GPAL), and 497–517 (FFLT…GFAV). Residues 546 to 700 (KRDLERIQGN…NKVGDAVKAA (155 aa)) enclose the STAS domain. A compositionally biased stretch (acidic residues) spans 728-742 (IDEESSDSNDNDDAE). The segment at 728–782 (IDEESSDSNDNDDAEIQERITEESENSEEVMSETSVSIEDATSLTSSRNSINSEE) is disordered. The span at 767–782 (DATSLTSSRNSINSEE) shows a compositional bias: polar residues.

This sequence belongs to the SLC26A/SulP transporter (TC 2.A.53) family.

The protein resides in the membrane. Possible sulfate transporter. This is Sulfate permease family protein 3 (sulp-3) from Caenorhabditis elegans.